The primary structure comprises 265 residues: Exosome complex component Rrp4 (265 aa).

The S1 motif domain maps to 65-137 (GDNVIGKIVD…EVNNIDLTTK (73 aa)). The KH domain maps to 147–205 (KGGQIVKITPSRVPRVIGRGGSMINMIKKLTMTRIIVGQNGWIWVNGKNEALEKLAIEA). Over residues 241–254 (EIPELEEEPQEETE) the composition is skewed to acidic residues. The disordered stretch occupies residues 241–265 (EIPELEEEPQEETEVNNNDGETRRT).

The protein belongs to the RRP4 family. In terms of assembly, component of the archaeal exosome complex. Forms a trimer of Rrp4 and/or Csl4 subunits. The trimer associates with a hexameric ring-like arrangement composed of 3 Rrp41-Rrp42 heterodimers.

It is found in the cytoplasm. Its function is as follows. Non-catalytic component of the exosome, which is a complex involved in RNA degradation. Increases the RNA binding and the efficiency of RNA degradation. Confers strong poly(A) specificity to the exosome. The polypeptide is Exosome complex component Rrp4 (Pyrococcus horikoshii (strain ATCC 700860 / DSM 12428 / JCM 9974 / NBRC 100139 / OT-3)).